The primary structure comprises 449 residues: Rubisco accumulation factor 1.2, chloroplastic (449 aa).

Residues 1 to 61 (MFSLKSLISS…NMIPKNPPAR (61 aa)) constitute a chloroplast transit peptide. The N-terminal alpha-helix stretch occupies residues 75–264 (IPTQFRSLDS…KAKNRLNTEL (190 aa)). Positions 262-288 (TELYGDKEAEKEKEKKKKEEEVKAIRI) form a coiled coil. The interval 288–434 (IPVVRLKFGE…GMVVLVVRPP (147 aa)) is C-terminal beta sheet.

Belongs to the RAF family. As to quaternary structure, homodimer.

Its subcellular location is the plastid. It localises to the chloroplast. In terms of biological role, required for assembly or stability of RuBisCO. Acts at a postchaperonin step to fold and/or assemble the large subunit (rbcL) into RuBisCO. RAF1 brackets an rbcL dimer (rbcL(2)), leading to rbcL(8)-RAF1(4) complex formation. In the next step, RBCS displaces RAF1, thus resulting in holoenzyme formation. This Arabidopsis thaliana (Mouse-ear cress) protein is Rubisco accumulation factor 1.2, chloroplastic.